The following is a 478-amino-acid chain: Poly(A) RNA polymerase cid11 (478 aa).

Mg(2+) contacts are provided by Asp-106 and Asp-108. The region spanning 263–317 (SLGRLLIDFFYYYGFSFNYLDSVVSVRSGTVLNKQEKGWAMEVNNSLCVEEPFNT) is the PAP-associated domain. Positions 428–447 (QSYENKANRDSDFQGQTSLT) are disordered.

The protein belongs to the DNA polymerase type-B-like family. Mg(2+) is required as a cofactor. Mn(2+) serves as cofactor.

It localises to the cytoplasm. The protein resides in the nucleus. It catalyses the reaction RNA(n) + ATP = RNA(n)-3'-adenine ribonucleotide + diphosphate. This is Poly(A) RNA polymerase cid11 (cid11) from Schizosaccharomyces pombe (strain 972 / ATCC 24843) (Fission yeast).